Here is an 86-residue protein sequence, read N- to C-terminus: Large ribosomal subunit protein bL27 (86 aa).

The segment at 1 to 24 (MATKKAGGSSRNGRDSAGRRLGVK) is disordered.

Belongs to the bacterial ribosomal protein bL27 family.

The sequence is that of Large ribosomal subunit protein bL27 from Rickettsia conorii (strain ATCC VR-613 / Malish 7).